Here is a 130-residue protein sequence, read N- to C-terminus: Universal stress protein MSMEG_4207 (130 aa).

N6-acetyllysine is present on Lys-104.

This sequence belongs to the universal stress protein A family. In terms of processing, acetylated on Lys-104 by PatA in the presence of acetyl-CoA as an acetyl donor.

This is Universal stress protein MSMEG_4207 from Mycolicibacterium smegmatis (strain ATCC 700084 / mc(2)155) (Mycobacterium smegmatis).